A 292-amino-acid polypeptide reads, in one-letter code: Undecaprenyl-diphosphatase (292 aa).

A run of 7 helical transmembrane segments spans residues 1–21 (MSLV…FLPV), 46–66 (FVTI…RADI), 88–108 (ARLG…GKLL), 114–134 (ALGN…LLAA), 192–212 (FLLS…STVP), 225–245 (VVGT…LLAW), and 253–273 (VFVV…LSGV).

Belongs to the UppP family.

It is found in the cell inner membrane. It catalyses the reaction di-trans,octa-cis-undecaprenyl diphosphate + H2O = di-trans,octa-cis-undecaprenyl phosphate + phosphate + H(+). In terms of biological role, catalyzes the dephosphorylation of undecaprenyl diphosphate (UPP). Confers resistance to bacitracin. The protein is Undecaprenyl-diphosphatase of Anaeromyxobacter dehalogenans (strain 2CP-C).